A 454-amino-acid chain; its full sequence is Sensor histidine kinase YkoH (454 aa).

Residues 1–12 lie on the Cytoplasmic side of the membrane; that stretch reads MKLKTKIHLYTS. A helical transmembrane segment spans residues 13–33; the sequence is ISLLILLILVHTAVYLIFSSA. The Extracellular segment spans residues 34 to 153; sequence LTSKDAARLA…NTEESLFLLK (120 aa). Residues 154–174 traverse the membrane as a helical segment; sequence IILIAASAAVCIASFFAGSLL. The Cytoplasmic segment spans residues 175–454; the sequence is ARRIINPIRR…QFSEQNGGGR (280 aa). An HAMP domain is found at 176–230; the sequence is RRIINPIRRLMITMKDIQRDKEFKTISLEGQSNDELYQMGLTFNEMAMMLKEHYD. The 213-residue stretch at 238-450 folds into the Histidine kinase domain; the sequence is DASHELKTPL…AVTMQFSEQN (213 aa). Histidine 241 is subject to Phosphohistidine; by autocatalysis.

It is found in the cell membrane. It catalyses the reaction ATP + protein L-histidine = ADP + protein N-phospho-L-histidine.. Functionally, probable member of the two-component regulatory system YkoH/YkoG. Potentially phosphorylates YkoG. The polypeptide is Sensor histidine kinase YkoH (ykoH) (Bacillus subtilis (strain 168)).